Consider the following 55-residue polypeptide: ATP synthase F(0) complex subunit 8 (55 aa).

The helical transmembrane segment at 4-24 (LNPSPWLLILLFSWLIFLTML) threads the bilayer. The tract at residues 36 to 55 (MPSTQNMCKQEPEPWTWPWA) is disordered.

Belongs to the ATPase protein 8 family. Component of the ATP synthase complex composed at least of ATP5F1A/subunit alpha, ATP5F1B/subunit beta, ATP5MC1/subunit c (homooctomer), MT-ATP6/subunit a, MT-ATP8/subunit 8, ATP5ME/subunit e, ATP5MF/subunit f, ATP5MG/subunit g, ATP5MK/subunit k, ATP5MJ/subunit j, ATP5F1C/subunit gamma, ATP5F1D/subunit delta, ATP5F1E/subunit epsilon, ATP5PF/subunit F6, ATP5PB/subunit b, ATP5PD/subunit d, ATP5PO/subunit OSCP. ATP synthase complex consists of a soluble F(1) head domain (subunits alpha(3) and beta(3)) - the catalytic core - and a membrane F(0) domain - the membrane proton channel (subunits c, a, 8, e, f, g, k and j). These two domains are linked by a central stalk (subunits gamma, delta, and epsilon) rotating inside the F1 region and a stationary peripheral stalk (subunits F6, b, d, and OSCP).

The protein localises to the mitochondrion membrane. Subunit 8, of the mitochondrial membrane ATP synthase complex (F(1)F(0) ATP synthase or Complex V) that produces ATP from ADP in the presence of a proton gradient across the membrane which is generated by electron transport complexes of the respiratory chain. ATP synthase complex consist of a soluble F(1) head domain - the catalytic core - and a membrane F(1) domain - the membrane proton channel. These two domains are linked by a central stalk rotating inside the F(1) region and a stationary peripheral stalk. During catalysis, ATP synthesis in the catalytic domain of F(1) is coupled via a rotary mechanism of the central stalk subunits to proton translocation. In vivo, can only synthesize ATP although its ATP hydrolase activity can be activated artificially in vitro. Part of the complex F(0) domain. The chain is ATP synthase F(0) complex subunit 8 from Latimeria chalumnae (Coelacanth).